We begin with the raw amino-acid sequence, 656 residues long: Acetyl-coenzyme A synthetase (656 aa).

CoA contacts are provided by residues 198–201 (RGGR) and T316. Residues 392–394 (GEP), 416–421 (DTFWQT), D507, and R522 contribute to the ATP site. Residue S530 participates in CoA binding. Residue R533 participates in ATP binding. The Mg(2+) site is built by V544, H546, and V549. R591 is a binding site for CoA. Position 616 is an N6-acetyllysine (K616).

The protein belongs to the ATP-dependent AMP-binding enzyme family. Mg(2+) serves as cofactor. Acetylated. Deacetylation by the SIR2-homolog deacetylase activates the enzyme.

The catalysed reaction is acetate + ATP + CoA = acetyl-CoA + AMP + diphosphate. Functionally, catalyzes the conversion of acetate into acetyl-CoA (AcCoA), an essential intermediate at the junction of anabolic and catabolic pathways. AcsA undergoes a two-step reaction. In the first half reaction, AcsA combines acetate with ATP to form acetyl-adenylate (AcAMP) intermediate. In the second half reaction, it can then transfer the acetyl group from AcAMP to the sulfhydryl group of CoA, forming the product AcCoA. The sequence is that of Acetyl-coenzyme A synthetase from Rhodobacter capsulatus (strain ATCC BAA-309 / NBRC 16581 / SB1003).